Consider the following 95-residue polypeptide: Aspartyl/glutamyl-tRNA(Asn/Gln) amidotransferase subunit C (95 aa).

This sequence belongs to the GatC family. Heterotrimer of A, B and C subunits.

It carries out the reaction L-glutamyl-tRNA(Gln) + L-glutamine + ATP + H2O = L-glutaminyl-tRNA(Gln) + L-glutamate + ADP + phosphate + H(+). The catalysed reaction is L-aspartyl-tRNA(Asn) + L-glutamine + ATP + H2O = L-asparaginyl-tRNA(Asn) + L-glutamate + ADP + phosphate + 2 H(+). Functionally, allows the formation of correctly charged Asn-tRNA(Asn) or Gln-tRNA(Gln) through the transamidation of misacylated Asp-tRNA(Asn) or Glu-tRNA(Gln) in organisms which lack either or both of asparaginyl-tRNA or glutaminyl-tRNA synthetases. The reaction takes place in the presence of glutamine and ATP through an activated phospho-Asp-tRNA(Asn) or phospho-Glu-tRNA(Gln). The protein is Aspartyl/glutamyl-tRNA(Asn/Gln) amidotransferase subunit C of Bradyrhizobium sp. (strain ORS 278).